The chain runs to 266 residues: Exosome complex component Rrp42 (266 aa).

The protein belongs to the RNase PH family. Rrp42 subfamily. Component of the archaeal exosome complex. Forms a hexameric ring-like arrangement composed of 3 Rrp41-Rrp42 heterodimers. The hexameric ring associates with a trimer of Rrp4 and/or Csl4 subunits.

It localises to the cytoplasm. Its function is as follows. Non-catalytic component of the exosome, which is a complex involved in RNA degradation. Contributes to the structuring of the Rrp41 active site. This chain is Exosome complex component Rrp42, found in Methanosarcina acetivorans (strain ATCC 35395 / DSM 2834 / JCM 12185 / C2A).